The following is a 241-amino-acid chain: Cobalt transport protein CbiM (241 aa).

A signal peptide spans 1-24; the sequence is MKKIKIISFSVAYLILLTPIYASA. The next 6 helical transmembrane spans lie at 30–50, 67–87, 99–119, 131–151, 160–180, and 202–222; these read GFLP…FIVG, LLLG…LPSV, LGTI…VLIF, TLGA…YFIF, SLAV…VTSL, and GIFA…TLIV.

The protein belongs to the CbiM family. Forms an energy-coupling factor (ECF) transporter complex composed of an ATP-binding protein (A component, CbiO), a transmembrane protein (T component, CbiQ) and 2 possible substrate-capture proteins (S components, CbiM and CbiN) of unknown stoichimetry.

It localises to the cell membrane. It participates in cofactor biosynthesis; adenosylcobalamin biosynthesis. Part of the energy-coupling factor (ECF) transporter complex CbiMNOQ involved in cobalt import. The polypeptide is Cobalt transport protein CbiM (Acetoanaerobium sticklandii (strain ATCC 12662 / DSM 519 / JCM 1433 / CCUG 9281 / NCIMB 10654 / HF) (Clostridium sticklandii)).